The primary structure comprises 479 residues: MAKENSKIALDIEGYLKEHENKDMLRFLTCGSVDDGKSTLIGRMLYDSKMIFDDQLSAAEGESRKYGTTGEKLDMALLVDGLQSEREQGITIDVAYRFFATEKRKFIIADTPGHEQYTRNMVTGASTADVAIILIDARKGILTQTRRHSFIVNLLGIEHVIVAINKMDLVDFSEEVFDKISGAYGALADELGIKNTYYIPVSALEGDNVVDRSKRSPWFSGQPLLGLLDSMDISKEPKEEDFRFPVQYVNRPNLDFRGFCGTIAAGLVRTGDEITVLPSGKTTKVKNIVNAGDITEKNRETMTEYAYAPMAVTITTEDEVDISRGDMIVHTKNLPRVSNSLKVMLVWMDETPMEPGKTYDIKRATSVVPGFIEHINYKVDINTYEREQVHRLGLNDIASCKMVLTQPIAADAYETNRLTGSFIVVDRISNDTVGAGMIVGVSRREEDVVKLSAKEYTDAERALNLYVRENFPEWECKVI.

A tr-type G domain is found at 22 to 238 (KDMLRFLTCG…DSMDISKEPK (217 aa)). The tract at residues 31-38 (GSVDDGKS) is G1. 31–38 (GSVDDGKS) provides a ligand contact to GTP. The segment at 89 to 93 (GITID) is G2. The interval 110–113 (DTPG) is G3. GTP is bound by residues 110–114 (DTPGH) and 165–168 (NKMD). The interval 165–168 (NKMD) is G4. The interval 202–204 (SAL) is G5.

This sequence belongs to the TRAFAC class translation factor GTPase superfamily. Classic translation factor GTPase family. CysN/NodQ subfamily. As to quaternary structure, heterodimer composed of CysD, the smaller subunit, and CysN.

It carries out the reaction sulfate + ATP + H(+) = adenosine 5'-phosphosulfate + diphosphate. It functions in the pathway sulfur metabolism; hydrogen sulfide biosynthesis; sulfite from sulfate: step 1/3. In terms of biological role, with CysD forms the ATP sulfurylase (ATPS) that catalyzes the adenylation of sulfate producing adenosine 5'-phosphosulfate (APS) and diphosphate, the first enzymatic step in sulfur assimilation pathway. APS synthesis involves the formation of a high-energy phosphoric-sulfuric acid anhydride bond driven by GTP hydrolysis by CysN coupled to ATP hydrolysis by CysD. The polypeptide is Sulfate adenylyltransferase subunit 1 (Sulfurovum sp. (strain NBC37-1)).